The chain runs to 588 residues: MDKTRQTELVRWLKQHSTSAKRWLRISMLLGVVSGLLIIAQAWFLAVILQALIMEHTPREQLLTPFILLLAVFVLRALLTVIRERVGFRCGQVVRQEVRNMVLNKLQALGPVWVKGKPAGSWATIVLEQIEDMQEYYSRYLPQMYLAGIIPIMILIAIFPFNWAAALILFATAPLIPIFMALVGLGAADANRRNFVALGRLSGSFLDRLRGLDTLRLFFREKAEVQQIRESTEDFRSRTMEVLRMAFLSSGVLEFFASISIAIVAVYFGFSYLGELNFGSYGLPVTMFAGFLALILSPEFFQPLRDLGTYYHAKAQAVGAAESLVTLLESDGEQKTETGDKTPQDKPIQIEANKLEIYSHDGQRLVGPLDFTIEPQQRIAVFGQSGAGKSSLLNLLLGFLPYKGSIKINGDELKELCPDKWRALIGWVGQNPHLPEQTLIENICLGKPTASEAEIQQAIDDAYVSEFLPMLPDGLNTRLGDYAARLSVGQAQRVAVARTLLKPSRILLLDEPAASLDAHSEKRVMHTLNQLAQQQTTIMVTHLLEETVNYDQIWVMANGQIIQRGHYAQLSQSEGPFARLLAHRSEEL.

The ABC transmembrane type-1 domain maps to 24 to 316; it reads LRISMLLGVV…LGTYYHAKAQ (293 aa). The next 6 membrane-spanning stretches (helical) occupy residues 29-49, 62-82, 149-169, 170-190, 250-270, and 276-296; these read LLGV…AVIL, LLTP…LTVI, IIPI…ALIL, FATA…AADA, SGVL…YFGF, and LNFG…ALIL. An ABC transporter domain is found at 350–583; the sequence is IEANKLEIYS…EGPFARLLAH (234 aa). 383–390 is a binding site for ATP; it reads GQSGAGKS.

It belongs to the ABC transporter superfamily.

It is found in the cell inner membrane. In terms of biological role, somehow involved in the cytochrome D branch of aerobic respiration. Seems to be a component of a transport system. The chain is Transport ATP-binding protein AarD (aarD) from Providencia stuartii.